A 172-amino-acid polypeptide reads, in one-letter code: Scytalone dehydratase-like protein Arp1 (172 aa).

Tyr-49 is a substrate binding site. Residues His-84 and His-109 contribute to the active site. Residue Asn-130 participates in substrate binding.

The protein belongs to the scytalone dehydratase family. Homotrimer. Each subunit contains an active site, located in the central part of the hydrophobic core of the monomer, which functions independently.

Its function is as follows. Scytalone dehydratase-like protein; part of the Pks2 gene cluster that mediates the formation of infectious structures (appressoria), enabling these fungi to kill insects faster. The product of the Pks2 gene cluster is different from the one of Pks1 and has still not been identified. The sequence is that of Scytalone dehydratase-like protein Arp1 from Metarhizium robertsii (strain ARSEF 23 / ATCC MYA-3075) (Metarhizium anisopliae (strain ARSEF 23)).